The following is a 450-amino-acid chain: WD repeat-containing protein ATCSA-1 (450 aa).

4 WD repeats span residues 41–81 (PHRG…DYEA), 101–141 (GHKY…AVVD), 148–185 (VYRT…FSHT), and 188–228 (GHRD…CFRV). A disordered region spans residues 269 to 298 (LQSKQTGSQSVKGSSSAKASVEKSRQKRIH). A compositionally biased stretch (low complexity) spans 271–287 (SKQTGSQSVKGSSSAKA). WD repeat units lie at residues 310 to 349 (AHYG…NTLV) and 397 to 436 (GHYE…EDEM).

Interacts with DDB1A. In terms of tissue distribution, expressed in roots, leaves, stems, flowers and siliques.

It is found in the nucleus. In terms of biological role, involved in UV-B tolerance and genome integrity. In association with DDB2, is necessary for repair of UV-B-induced DNA lesions. The polypeptide is WD repeat-containing protein ATCSA-1 (Arabidopsis thaliana (Mouse-ear cress)).